A 194-amino-acid polypeptide reads, in one-letter code: Phosphoheptose isomerase (194 aa).

The 158-residue stretch at 37–194 (ISNSFKQGGK…LIEFEMAKQA (158 aa)) folds into the SIS domain. 52-54 (NGG) contributes to the substrate binding site. Zn(2+) contacts are provided by His61 and Glu65. Substrate contacts are provided by residues Glu65, 93 to 94 (ND), 119 to 121 (STS), Ser124, and Gln172. Zn(2+) is bound by residues Gln172 and His180.

It belongs to the SIS family. GmhA subfamily. Homotetramer. Zn(2+) is required as a cofactor.

The protein resides in the cytoplasm. The enzyme catalyses 2 D-sedoheptulose 7-phosphate = D-glycero-alpha-D-manno-heptose 7-phosphate + D-glycero-beta-D-manno-heptose 7-phosphate. The protein operates within carbohydrate biosynthesis; D-glycero-D-manno-heptose 7-phosphate biosynthesis; D-glycero-alpha-D-manno-heptose 7-phosphate and D-glycero-beta-D-manno-heptose 7-phosphate from sedoheptulose 7-phosphate: step 1/1. In terms of biological role, catalyzes the isomerization of sedoheptulose 7-phosphate in D-glycero-D-manno-heptose 7-phosphate. The chain is Phosphoheptose isomerase from Haemophilus influenzae (strain PittEE).